The following is a 112-amino-acid chain: ATP synthase epsilon chain (112 aa).

The protein belongs to the ATPase epsilon chain family. In terms of assembly, F-type ATPases have 2 components, CF(1) - the catalytic core - and CF(0) - the membrane proton channel. CF(1) has five subunits: alpha(3), beta(3), gamma(1), delta(1), epsilon(1). CF(0) has three main subunits: a, b and c.

Its subcellular location is the cell inner membrane. Produces ATP from ADP in the presence of a proton gradient across the membrane. This Rickettsia peacockii (strain Rustic) protein is ATP synthase epsilon chain.